Here is a 320-residue protein sequence, read N- to C-terminus: Malate dehydrogenase (320 aa).

NAD(+)-binding positions include 10-15 (GAGQIG) and aspartate 34. 2 residues coordinate substrate: arginine 83 and arginine 89. NAD(+) is bound by residues asparagine 96 and 119-121 (ITN). Substrate is bound by residues asparagine 121 and arginine 152. Residue histidine 176 is the Proton acceptor of the active site.

It belongs to the LDH/MDH superfamily. MDH type 3 family.

It catalyses the reaction (S)-malate + NAD(+) = oxaloacetate + NADH + H(+). In terms of biological role, catalyzes the reversible oxidation of malate to oxaloacetate. The protein is Malate dehydrogenase of Methylobacterium sp. (strain 4-46).